The following is a 341-amino-acid chain: Phosphate acyltransferase (341 aa).

It belongs to the PlsX family. In terms of assembly, homodimer. Probably interacts with PlsY.

Its subcellular location is the cytoplasm. It catalyses the reaction a fatty acyl-[ACP] + phosphate = an acyl phosphate + holo-[ACP]. The protein operates within lipid metabolism; phospholipid metabolism. Catalyzes the reversible formation of acyl-phosphate (acyl-PO(4)) from acyl-[acyl-carrier-protein] (acyl-ACP). This enzyme utilizes acyl-ACP as fatty acyl donor, but not acyl-CoA. This chain is Phosphate acyltransferase, found in Pseudoalteromonas atlantica (strain T6c / ATCC BAA-1087).